Reading from the N-terminus, the 301-residue chain is Ribosomal RNA small subunit methyltransferase A (301 aa).

N29, L31, G56, E77, D102, and N127 together coordinate S-adenosyl-L-methionine.

This sequence belongs to the class I-like SAM-binding methyltransferase superfamily. rRNA adenine N(6)-methyltransferase family. RsmA subfamily.

It is found in the cytoplasm. The catalysed reaction is adenosine(1518)/adenosine(1519) in 16S rRNA + 4 S-adenosyl-L-methionine = N(6)-dimethyladenosine(1518)/N(6)-dimethyladenosine(1519) in 16S rRNA + 4 S-adenosyl-L-homocysteine + 4 H(+). Specifically dimethylates two adjacent adenosines (A1518 and A1519) in the loop of a conserved hairpin near the 3'-end of 16S rRNA in the 30S particle. May play a critical role in biogenesis of 30S subunits. This chain is Ribosomal RNA small subunit methyltransferase A, found in Halothermothrix orenii (strain H 168 / OCM 544 / DSM 9562).